A 69-amino-acid chain; its full sequence is Ribosome modulation factor (69 aa).

Belongs to the ribosome modulation factor family.

The protein localises to the cytoplasm. During stationary phase, converts 70S ribosomes to an inactive dimeric form (100S ribosomes). The protein is Ribosome modulation factor of Chromohalobacter salexigens (strain ATCC BAA-138 / DSM 3043 / CIP 106854 / NCIMB 13768 / 1H11).